A 581-amino-acid chain; its full sequence is Arginine--tRNA ligase (581 aa).

Residues 126–136 (PNLAKEMHVGH) carry the 'HIGH' region motif.

Belongs to the class-I aminoacyl-tRNA synthetase family. As to quaternary structure, monomer.

It localises to the cytoplasm. It catalyses the reaction tRNA(Arg) + L-arginine + ATP = L-arginyl-tRNA(Arg) + AMP + diphosphate. This Shewanella frigidimarina (strain NCIMB 400) protein is Arginine--tRNA ligase.